The sequence spans 233 residues: MLNTPRICVVVIGKTLEEFLSQLEAAQTAVDFVELRIDYLEQINPNWVRIIKNHTQKKAILCCRARADGGKFLGTPEAQQEILQAGNDLGFDYLDIDLPVANKISIHEKKAKIIISYHNFLHTPPITELNFLLENMRLFNPDVFKFATKSEQYEDVKTLFKLLINKKNNENMIVLGMGEQGKIIRLLSPLLGGYLTFSSINGAISAPGQIDFKTMQDFYQRFYKISSPLKGED.

3-dehydroquinate is bound by residues 34-36 (ELR) and Arg64. His118 serves as the catalytic Proton donor/acceptor. Lys145 functions as the Schiff-base intermediate with substrate in the catalytic mechanism. 3 residues coordinate 3-dehydroquinate: Arg185, Ser205, and Gln209.

The protein belongs to the type-I 3-dehydroquinase family. As to quaternary structure, homodimer.

It carries out the reaction 3-dehydroquinate = 3-dehydroshikimate + H2O. It functions in the pathway metabolic intermediate biosynthesis; chorismate biosynthesis; chorismate from D-erythrose 4-phosphate and phosphoenolpyruvate: step 3/7. Involved in the third step of the chorismate pathway, which leads to the biosynthesis of aromatic amino acids. Catalyzes the cis-dehydration of 3-dehydroquinate (DHQ) and introduces the first double bond of the aromatic ring to yield 3-dehydroshikimate. The chain is 3-dehydroquinate dehydratase from Coxiella burnetii (strain CbuK_Q154) (Coxiella burnetii (strain Q154)).